The primary structure comprises 350 residues: Inhibitor of nuclear factor kappa-B kinase-interacting protein (350 aa).

Residues 1 to 11 show a composition bias toward basic residues; the sequence is MSEVKSRKKSG. A disordered region spans residues 1–39; sequence MSEVKSRKKSGPKGAPAAEPGKRSEGGKTPVARSSGGGG. A helical membrane pass occupies residues 46-62; it reads CLSLLSLGTCLGLAWFV. N144 carries N-linked (GlcNAc...) asparagine glycosylation. Residues 184-217 are a coiled coil; the sequence is GLVTDVISLTDSVQELENKIEKVEKNTVKNIGDL. An N-linked (GlcNAc...) asparagine glycan is attached at N328.

In terms of processing, N-glycosylated. Isoform 4 is glycosylated at Asn-154. In terms of tissue distribution, expressed in vein endothelial cells. Isoform 4 is expressed in lung, kidney, spleen, thymus and skeletal muscle.

It is found in the endoplasmic reticulum membrane. Target of p53/TP53 with pro-apoptotic function. The chain is Inhibitor of nuclear factor kappa-B kinase-interacting protein (IKBIP) from Homo sapiens (Human).